We begin with the raw amino-acid sequence, 188 residues long: Adenine phosphoribosyltransferase (188 aa).

It belongs to the purine/pyrimidine phosphoribosyltransferase family. In terms of assembly, homodimer.

The protein localises to the cytoplasm. It carries out the reaction AMP + diphosphate = 5-phospho-alpha-D-ribose 1-diphosphate + adenine. It functions in the pathway purine metabolism; AMP biosynthesis via salvage pathway; AMP from adenine: step 1/1. Catalyzes a salvage reaction resulting in the formation of AMP, that is energically less costly than de novo synthesis. In Burkholderia ambifaria (strain MC40-6), this protein is Adenine phosphoribosyltransferase.